We begin with the raw amino-acid sequence, 79 residues long: DNA-directed RNA polymerase subunit omega (79 aa).

Belongs to the RNA polymerase subunit omega family. In terms of assembly, the RNAP catalytic core consists of 2 alpha, 1 beta, 1 beta' and 1 omega subunit. When a sigma factor is associated with the core the holoenzyme is formed, which can initiate transcription.

The catalysed reaction is RNA(n) + a ribonucleoside 5'-triphosphate = RNA(n+1) + diphosphate. Its function is as follows. Promotes RNA polymerase assembly. Latches the N- and C-terminal regions of the beta' subunit thereby facilitating its interaction with the beta and alpha subunits. This is DNA-directed RNA polymerase subunit omega from Bdellovibrio bacteriovorus (strain ATCC 15356 / DSM 50701 / NCIMB 9529 / HD100).